Consider the following 701-residue polypeptide: DNA ligase A (701 aa).

Residues 1-23 are disordered; the sequence is MSEKATGEVEAELPEHPDADERR. NAD(+) contacts are provided by residues 49–53, 99–100, and E129; these read DAEFD and SL. The N6-AMP-lysine intermediate role is filled by K131. NAD(+)-binding residues include R152, E192, K308, and K332. C426, C429, C445, and C451 together coordinate Zn(2+). The BRCT domain maps to 615–701; sequence SIERTLEGLS…EQGPPVEPAE (87 aa).

This sequence belongs to the NAD-dependent DNA ligase family. LigA subfamily. Mg(2+) is required as a cofactor. Mn(2+) serves as cofactor.

The catalysed reaction is NAD(+) + (deoxyribonucleotide)n-3'-hydroxyl + 5'-phospho-(deoxyribonucleotide)m = (deoxyribonucleotide)n+m + AMP + beta-nicotinamide D-nucleotide.. Its function is as follows. DNA ligase that catalyzes the formation of phosphodiester linkages between 5'-phosphoryl and 3'-hydroxyl groups in double-stranded DNA using NAD as a coenzyme and as the energy source for the reaction. It is essential for DNA replication and repair of damaged DNA. Probably the only ligase required for non-homologous end joining (NHEJ) repair of 3-overhangs. This is DNA ligase A from Mycolicibacterium smegmatis (strain ATCC 700084 / mc(2)155) (Mycobacterium smegmatis).